The sequence spans 234 residues: Large ribosomal subunit protein uL1 (234 aa).

This sequence belongs to the universal ribosomal protein uL1 family. In terms of assembly, part of the 50S ribosomal subunit.

In terms of biological role, binds directly to 23S rRNA. The L1 stalk is quite mobile in the ribosome, and is involved in E site tRNA release. Functionally, protein L1 is also a translational repressor protein, it controls the translation of the L11 operon by binding to its mRNA. The sequence is that of Large ribosomal subunit protein uL1 from Salmonella agona (strain SL483).